The following is an 88-amino-acid chain: Small ribosomal subunit protein bS18 (88 aa).

A disordered region spans residues 1–22; sequence MSTKNAKPKKEAQRRPSRKAKV.

It belongs to the bacterial ribosomal protein bS18 family. Part of the 30S ribosomal subunit. Forms a tight heterodimer with protein bS6.

Its function is as follows. Binds as a heterodimer with protein bS6 to the central domain of the 16S rRNA, where it helps stabilize the platform of the 30S subunit. The chain is Small ribosomal subunit protein bS18 (rpsR) from Thermus thermophilus (strain ATCC BAA-163 / DSM 7039 / HB27).